A 396-amino-acid polypeptide reads, in one-letter code: RNA polymerase principal sigma factor HrdA (396 aa).

The span at Met1–Pro20 shows a compositional bias: basic residues. The disordered stretch occupies residues Met1–Ser96. 2 stretches are compositionally biased toward low complexity: residues Gln33 to Thr42 and Leu56 to Pro75. The short motif at Asp187–Val200 is the Polymerase core binding element. Positions Leu357 to Ser376 form a DNA-binding region, H-T-H motif.

This sequence belongs to the sigma-70 factor family. Interacts transiently with the RNA polymerase catalytic core. Interacts with RNA polymerase-binding protein RbpA.

Its function is as follows. Sigma factors are initiation factors that promote the attachment of RNA polymerase to specific initiation sites and are then released. This is RNA polymerase principal sigma factor HrdA (hrdA) from Streptomyces coelicolor (strain ATCC BAA-471 / A3(2) / M145).